The chain runs to 526 residues: Probable Xaa-Pro aminopeptidase MGG_05684 (526 aa).

Residues Asp-285, Asp-296, Glu-447, and Glu-488 each coordinate Mn(2+).

This sequence belongs to the peptidase M24B family. Requires Mn(2+) as cofactor.

It carries out the reaction Release of any N-terminal amino acid, including proline, that is linked to proline, even from a dipeptide or tripeptide.. Functionally, catalyzes the removal of a penultimate prolyl residue from the N-termini of peptides. The protein is Probable Xaa-Pro aminopeptidase MGG_05684 of Pyricularia oryzae (strain 70-15 / ATCC MYA-4617 / FGSC 8958) (Rice blast fungus).